A 440-amino-acid polypeptide reads, in one-letter code: Chromosome partition protein MukF (440 aa).

The leucine-zipper stretch occupies residues leucine 208–isoleucine 236.

It belongs to the MukF family. As to quaternary structure, interacts, and probably forms a ternary complex, with MukE and MukB via its C-terminal region. The complex formation is stimulated by calcium or magnesium. It is required for an interaction between MukE and MukB.

The protein localises to the cytoplasm. Its subcellular location is the nucleoid. Involved in chromosome condensation, segregation and cell cycle progression. May participate in facilitating chromosome segregation by condensation DNA from both sides of a centrally located replisome during cell division. Not required for mini-F plasmid partitioning. Probably acts via its interaction with MukB and MukE. Overexpression results in anucleate cells. It has a calcium binding activity. The protein is Chromosome partition protein MukF of Yersinia enterocolitica serotype O:8 / biotype 1B (strain NCTC 13174 / 8081).